A 166-amino-acid chain; its full sequence is Large ribosomal subunit protein uL10 (166 aa).

The protein belongs to the universal ribosomal protein uL10 family. In terms of assembly, part of the ribosomal stalk of the 50S ribosomal subunit. The N-terminus interacts with L11 and the large rRNA to form the base of the stalk. The C-terminus forms an elongated spine to which L12 dimers bind in a sequential fashion forming a multimeric L10(L12)X complex.

Functionally, forms part of the ribosomal stalk, playing a central role in the interaction of the ribosome with GTP-bound translation factors. The protein is Large ribosomal subunit protein uL10 of Lysinibacillus sphaericus (strain C3-41).